We begin with the raw amino-acid sequence, 360 residues long: Photosystem II protein D1 1 (360 aa).

3 helical membrane-spanning segments follow: residues 29-46 (YVGW…SATI), 118-133 (HFLI…EWEL), and 142-156 (WICI…AAAA). His-118 is a chlorophyll a binding site. Tyr-126 contacts pheophytin a. Residues Asp-170 and Glu-189 each contribute to the [CaMn4O5] cluster site. A helical transmembrane segment spans residues 197 to 218 (FHMLGVAGVFGGSLFSAMHGSL). His-198 contacts chlorophyll a. A quinone is bound by residues His-215 and 264–265 (SF). His-215 lines the Fe cation pocket. Residue His-272 participates in Fe cation binding. A helical membrane pass occupies residues 274–288 (FLAAWPVIGIWFTAL). The [CaMn4O5] cluster site is built by His-332, Glu-333, Asp-342, and Ala-344. The propeptide occupies 345–360 (GTESAPVAVGNADLNG).

Belongs to the reaction center PufL/M/PsbA/D family. PSII is composed of 1 copy each of membrane proteins PsbA, PsbB, PsbC, PsbD, PsbE, PsbF, PsbH, PsbI, PsbJ, PsbK, PsbL, PsbM, PsbT, PsbX, Psb30/Ycf12, peripheral proteins PsbO, CyanoQ (PsbQ), PsbU, PsbV and a large number of cofactors. It forms dimeric complexes. The D1/D2 heterodimer binds P680, chlorophylls that are the primary electron donor of PSII, and subsequent electron acceptors. It shares a non-heme iron and each subunit binds pheophytin, quinone, additional chlorophylls, carotenoids and lipids. D1 provides most of the ligands for the Mn4-Ca-O5 cluster of the oxygen-evolving complex (OEC). There is also a Cl(-1) ion associated with D1 and D2, which is required for oxygen evolution. The PSII complex binds additional chlorophylls, carotenoids and specific lipids. serves as cofactor. In terms of processing, tyr-161 forms a radical intermediate that is referred to as redox-active TyrZ, YZ or Y-Z. Post-translationally, C-terminally processed by CtpA; processing is essential to allow assembly of the oxygen-evolving complex and thus photosynthetic growth.

It is found in the cell inner membrane. The catalysed reaction is 2 a plastoquinone + 4 hnu + 2 H2O = 2 a plastoquinol + O2. Its function is as follows. Photosystem II (PSII) is a light-driven water:plastoquinone oxidoreductase that uses light energy to abstract electrons from H(2)O, generating O(2) and a proton gradient subsequently used for ATP formation. It consists of a core antenna complex that captures photons, and an electron transfer chain that converts photonic excitation into a charge separation. The D1/D2 (PsbA/PsbD) reaction center heterodimer binds P680, the primary electron donor of PSII as well as several subsequent electron acceptors. This chain is Photosystem II protein D1 1, found in Gloeobacter violaceus (strain ATCC 29082 / PCC 7421).